Reading from the N-terminus, the 117-residue chain is MRGLLYLALAIVSEVFGSTMLKLSEGFTQAWPIAGVIVGFLSAFTFLSFSLKTIDLSSAYATWSGVGTALTAIVGFLLFGETISLKGVFGLTLVIAGVVVLNQSKAHAEDKKQTACE.

4 helical membrane-spanning segments follow: residues 3-23, 31-51, 59-79, and 81-101; these read GLLY…MLKL, WPIA…SFSL, AYAT…FLLF, and ETIS…VVVL.

The protein belongs to the drug/metabolite transporter (DMT) superfamily. Small multidrug resistance (SMR) (TC 2.A.7.1) family. EbrA/EbrB subfamily. The efflux pump is composed of EbrA and EbrB.

The protein localises to the cell membrane. Part of a multidrug efflux pump. Confers resistance to cationic lipophilic dyes such as ethidium bromide, acriflavine, pyronine Y and safranin O. The efflux is probably coupled to an influx of protons. This Bacillus subtilis (strain 168) protein is Multidrug resistance protein EbrB (ebrB).